Here is a 925-residue protein sequence, read N- to C-terminus: Collagen alpha-2(I) chain (925 aa).

The segment at 1 to 925 (SGGFDFSFLP…FGYEGDFYRA (925 aa)) is disordered. Pro10 and Pro13 each carry 4-hydroxyproline. Positions 22–34 (RYYGVGLGPGPMG) are enriched in gly residues. Low complexity predominate over residues 35-74 (LMGPRGPPGASGAPGPQGFQGPAGEPGEPGQTGPAGARGP). 4-hydroxyproline occurs at positions 42 and 48. At Lys103 the chain carries 5-hydroxylysine; alternate. Lys103 carries an O-linked (Gal...) hydroxylysine; alternate glycan. Residues 154–171 (DGSVGPVGPAGPIGSAGP) show a composition bias toward low complexity. Residues 271–280 (GESGGKGEPG) show a composition bias toward gly residues. A compositionally biased stretch (low complexity) spans 281-291 (SAGPQGPPGSS). Residues 306–315 (GLRGGPGSRG) show a composition bias toward gly residues. Residues Pro317, Pro332, and Pro335 each carry the 4-hydroxyproline modification. Positions 363–379 (IDGRPGPIGPAGARGEA) are enriched in low complexity. Residues 423 to 432 (GVQGGKGEQG) are compositionally biased toward gly residues. Composition is skewed to low complexity over residues 479–496 (PGES…SRGP) and 508–518 (EPGVVGAPGTA). Residues 519 to 528 (GPAGSGGLPG) show a composition bias toward gly residues. Low complexity-rich tracts occupy residues 551-595 (VGTT…PRGS) and 602-622 (VGPA…QPGA). Residues 623 to 632 (KGERGTKGPK) are compositionally biased toward basic and acidic residues. The segment covering 640–650 (PTGPVGSAGPA) has biased composition (low complexity). Positions 660 to 669 (GSRGDGGPPG) are enriched in gly residues. The segment covering 671-680 (TGFPGAAGRT) has biased composition (low complexity). The span at 696–718 (GAAGKGDQGPVGRGETGAGGPPG) shows a compositional bias: gly residues. 2 stretches are compositionally biased toward low complexity: residues 719–753 (FTGE…LGLP) and 761–771 (LPGVAGAVGEP). Residues 772–782 (GPLGIGPPGAR) are compositionally biased toward gly residues. The segment covering 791–806 (EPGPVGSVGPVGALGP) has biased composition (low complexity). Basic and acidic residues predominate over residues 816–827 (RGDKGEPGEKGP). The segment covering 897-907 (PAGPPGPPGPP) has biased composition (pro residues).

It belongs to the fibrillar collagen family. In terms of assembly, trimers of one alpha 2(I) and two alpha 1(I) chains. Interacts (via C-terminus) with TMEM131 (via PapD-L domain); the interaction is direct and is involved in assembly and TRAPPIII ER-to-Golgi transport complex-dependent secretion of collagen. In terms of processing, prolines at the third position of the tripeptide repeating unit (G-X-Y) are hydroxylated in some or all of the chains. In terms of tissue distribution, expressed in bones.

It localises to the secreted. The protein resides in the extracellular space. Its subcellular location is the extracellular matrix. Its function is as follows. Type I collagen is a member of group I collagen (fibrillar forming collagen). This Acratocnus sp. (strain SLP-2019) (Ground sloth) protein is Collagen alpha-2(I) chain.